The following is a 378-amino-acid chain: Glutamate 5-kinase (378 aa).

Lys-14 lines the ATP pocket. Substrate is bound by residues Ser-54, Asp-141, and Asn-153. 173–174 (SD) lines the ATP pocket. One can recognise a PUA domain in the interval 279–356 (AGRLTVDAGA…DEISAILGYD (78 aa)).

The protein belongs to the glutamate 5-kinase family.

The protein localises to the cytoplasm. It catalyses the reaction L-glutamate + ATP = L-glutamyl 5-phosphate + ADP. It participates in amino-acid biosynthesis; L-proline biosynthesis; L-glutamate 5-semialdehyde from L-glutamate: step 1/2. Functionally, catalyzes the transfer of a phosphate group to glutamate to form L-glutamate 5-phosphate. The chain is Glutamate 5-kinase from Brucella abortus (strain S19).